The following is a 625-amino-acid chain: MATEINMPMGPGPLGEAGSLKIDTGSNMEVSIPSPVSAAPGELNETPSPSTPANPNSASRRPPRKSTLTQQQKNQKRQRATQDQLTTLEQEFAKNPTPTATVRDRIAEEINMTERSVQIWFQNRRAKIKLMAKKSLETGEDIDSIPESMRTYLAMQAMESGKGFPGAFLGRGMMPYGHGNMLMAGEQGGPSKVVIHHLTCRSLSIGKWTRVGQNTMDLIVFYSPDKCTMTYYINNEQAGYKIEYHFSCIKSICVENADDPTKVGGIVIELNRPPSFFMDQSPTSNGFFQCGDFTEDQQASQCLVHHLGGNPKVLSGQLAKLVSLESFMNRHNTMAYHPDPMAHGGMPVSAPVSPTNRPSSQPNFAQPHVGLFQESQWGISPAHHVMRGPGHKRQRSRSVPIAVDFSMLQTPMPSFYIQHPGEAQPQPHSPNIYAPVPQQPHALSPAGPGLRIDTQAGFGLDMRQYPMSATTAPSPSEYNSPSFFSQAPENTPLPASNFNTPYSSTFLSPMMNATNLNVPQSVSPISFSGGDPAIVDQSPPMSMLGRSASADIYHGGDSSAISDDGHSLNDMYSKHAITLPMHPPHSPAFVEPSQAELDMNQLVQFDTVDPSSLSPESVHQGIGGQ.

Disordered regions lie at residues 1 to 83 (MATE…ATQD) and 466 to 496 (PMSA…LPAS). Low complexity predominate over residues 46–59 (TPSPSTPANPNSAS). Residues 73-132 (KNQKRQRATQDQLTTLEQEFAKNPTPTATVRDRIAEEINMTERSVQIWFQNRRAKIKLMA) constitute a DNA-binding region (homeobox). Positions 467–496 (MSATTAPSPSEYNSPSFFSQAPENTPLPAS) are enriched in polar residues.

It localises to the nucleus. In terms of biological role, transcriptional regulator; part of the gene cluster that mediates the biosynthesis of pyriculol and pyriculariol, two heptaketides that induce lesion formation upon application on rice leaves but are dispensable for pathogenicity. With TRF1, negatively regulates the expression of the gene cluster and the subsequent pyriculol and pyriculariol production. The polypeptide is Pyriculol/pyriculariol biosynthesis cluster transcription factor 1 (Pyricularia oryzae (strain 70-15 / ATCC MYA-4617 / FGSC 8958) (Rice blast fungus)).